The chain runs to 412 residues: N-carbamoyl-L-amino-acid amidohydrolase (412 aa).

4 residues coordinate a divalent metal cation: His82, Asp93, Glu128, and His193. The an N-carbamoyl-L-alpha-amino acid site is built by Gln196, His229, Asn278, Arg291, and Gly360. An involved in dimerization region spans residues 212–330; sequence SIVGVRALRV…DVDEFFNLSP (119 aa). A divalent metal cation is bound at residue His385.

This sequence belongs to the peptidase M20 family. Homodimer. Mn(2+) is required as a cofactor. Ni(2+) serves as cofactor. It depends on Co(2+) as a cofactor. Requires Fe(2+) as cofactor.

The catalysed reaction is an N-carbamoyl-L-alpha-amino acid + H2O + 2 H(+) = an L-alpha-amino acid + NH4(+) + CO2. The enzyme catalyses N-carbamoyl-L-tryptophan + H2O + 2 H(+) = L-tryptophan + NH4(+) + CO2. It catalyses the reaction N-carbamoyl-L-tyrosine + H2O + 2 H(+) = L-tyrosine + NH4(+) + CO2. It carries out the reaction N-carbamoyl-L-phenylalanine + H2O + 2 H(+) = L-phenylalanine + NH4(+) + CO2. In terms of biological role, catalyzes the hydrolysis of aliphatic N-carbamoyl-L-alpha-amino acids to free L-alpha-amino acids. Is strictly L-specific since it is inactive toward N-carbamoyl-D-alpha-amino acids. Shows a preference for aromatic N-carbamoyl-L-alpha-amino acids, such as N-carbamoyl-L-tryptophan and N-carbamoyl-L-tyrosine and, to a lesser extent, N-carbamoyl-L-phenylalanine and the non-natural amino acid N-carbamoyl-L-thienylalanine. Carbamoyl derivatives of beta-alanine and charged aliphatic amino acids are not accepted as substrates. This Paenarthrobacter aurescens (Arthrobacter aurescens) protein is N-carbamoyl-L-amino-acid amidohydrolase.